Consider the following 95-residue polypeptide: Small ribosomal subunit protein bS18 (95 aa).

This sequence belongs to the bacterial ribosomal protein bS18 family. In terms of assembly, part of the 30S ribosomal subunit. Forms a tight heterodimer with protein bS6.

Binds as a heterodimer with protein bS6 to the central domain of the 16S rRNA, where it helps stabilize the platform of the 30S subunit. This is Small ribosomal subunit protein bS18 from Ehrlichia canis (strain Jake).